The primary structure comprises 335 residues: Tetraacyldisaccharide 4'-kinase (335 aa).

Residue 58-65 (TVGGVGKT) coordinates ATP.

This sequence belongs to the LpxK family.

It carries out the reaction a lipid A disaccharide + ATP = a lipid IVA + ADP + H(+). It participates in glycolipid biosynthesis; lipid IV(A) biosynthesis; lipid IV(A) from (3R)-3-hydroxytetradecanoyl-[acyl-carrier-protein] and UDP-N-acetyl-alpha-D-glucosamine: step 6/6. Functionally, transfers the gamma-phosphate of ATP to the 4'-position of a tetraacyldisaccharide 1-phosphate intermediate (termed DS-1-P) to form tetraacyldisaccharide 1,4'-bis-phosphate (lipid IVA). In Caulobacter sp. (strain K31), this protein is Tetraacyldisaccharide 4'-kinase.